The chain runs to 813 residues: Polycomb group protein FERTILIZATION-INDEPENDENT SEED 2 (813 aa).

Residues 1–27 (MARKSIRGKEVVMVSDDDDDDDDVDDD) are disordered. Residues 15–26 (SDDDDDDDDVDD) are compositionally biased toward acidic residues. Residues 134–155 (CPFCLIPCGGHEGLQLHLKSSH) form a C2H2-type zinc finger. Disordered stretches follow at residues 197–216 (SPLT…DDSN), 232–261 (DLPR…SEKI), and 274–648 (ESSE…RKEL). A compositionally biased stretch (basic and acidic residues) spans 232–246 (DLPRGTENDSTHVND). Residues 243 to 264 (HVNDDNVSSPPRAHSSEKISDI) form an A-1 repeat. The segment at 243–542 (HVNDDNVSSP…HSSKKNKSTR (300 aa)) is 12 X approximate repeat A. The stretch at 265–281 (LTTTQLAIAESSEPKVP) is one B-1 repeat. The interval 265 to 640 (LTTTQLAIAE…KAEPSEPKVT (376 aa)) is 7 X approximate repeat B. The stretch at 282 to 304 (HVNDGNVSSPPRAHSSAEKNEST) is one A-2 repeat. Basic and acidic residues-rich tracts occupy residues 296–307 (SSAEKNESTHVN), 319–331 (HSLE…HVNE), and 344–353 (KKNESTHMND). An A-3 repeat occupies 305–327 (HVNDDDDVSSPPRAHSLEKNEST). One copy of the A-4 repeat lies at 328–349 (HVNEDNISSPPKAHSSKKNEST). The A-5 repeat unit spans residues 350–371 (HMNDEDVSFPPRTRSSKETSDI). The B-2 repeat unit spans residues 372–388 (LTTTQPAIVEPSEPKVR). The segment covering 388–402 (RRGSRRKQLYAKRYK) has biased composition (basic residues). Residues 403–419 (ARETQPAIAESSEPKVL) form a B-3 repeat. 2 stretches are compositionally biased toward basic and acidic residues: residues 414–423 (SEPKVLHVND) and 453–462 (SEPKVPHVND). One copy of the A-6 repeat lies at 420–441 (HVNDENVSSPPEAHSLEKASDI). Residues 442-458 (LTTTQPAIAESSEPKVP) form a B-4 repeat. Residues 459 to 481 (HVNDENVSSTPRAHSSKKNKSTR) form an A-7 repeat. A compositionally biased stretch (basic residues) spans 472–481 (HSSKKNKSTR). An A-8 repeat occupies 482-502 (KNVDNVPSPPKTRSSKKTSDI). Residues 501-512 (DILTTTQPTIAE) show a composition bias toward polar residues. A B-5 repeat occupies 503–519 (LTTTQPTIAESSEPKVR). Residues 514 to 523 (SEPKVRHVND) are compositionally biased toward basic and acidic residues. The stretch at 520–542 (HVNDDNVSSTPRAHSSKKNKSTR) is one A-9 repeat. The stretch at 543-563 (KNDDNIPSPPKTRSSKKTSNI) is one A-10 repeat. One copy of the B-6 repeat lies at 564-579 (LTRTQPAIAESEPKVP). Basic and acidic residues predominate over residues 574 to 586 (SEPKVPHVNDDKV). The stretch at 580–601 (HVNDDKVSSTPRAHSSKKNKST) is one A-11 repeat. Positions 593–602 (HSSKKNKSTH) are enriched in basic residues. The A-12 repeat unit spans residues 602 to 623 (HKKDDNASLPPKTRSSKKTSDI). The B-7 repeat unit spans residues 624–640 (LATTQPAKAEPSEPKVT). A VEFS-box region spans residues 648–783 (LHAERCEAKR…CAKTFHKCTT (136 aa)).

Belongs to the VEFS (VRN2-EMF2-FIS2-SU(Z)12) family. In terms of assembly, probably indirectly associated with FIE and/or MEA. In plants, PcG complexes are probably composed of a member of the EZ family (CLF or MEA), FIE, and a member of the VEFS family (FIS2, VRN2 or EMF2). In terms of tissue distribution, weakly expressed. Expressed in late siliques.

It localises to the nucleus. Functionally, polycomb group (PcG) protein. PcG proteins act by forming multiprotein complexes, which are required to maintain the transcriptionally repressive state of homeotic genes throughout development. PcG proteins are not required to initiate repression, but to maintain it during later stages of development. They probably act via the methylation of histones, rendering chromatin heritably changed in its expressibility. Required to prevent the proliferation of the central cell by repressing unknown target genes before fertilization. Regulates the anteroposterior organization of the endosperm. The protein is Polycomb group protein FERTILIZATION-INDEPENDENT SEED 2 of Arabidopsis thaliana (Mouse-ear cress).